The following is a 261-amino-acid chain: Aminoglycoside N(3)-acetyltransferase IV (261 aa).

The protein belongs to the antibiotic N-acetyltransferase family.

The enzyme catalyses a 2-deoxystreptamine antibiotic + acetyl-CoA = an N(3)-acetyl-2-deoxystreptamine antibiotic + CoA + H(+). Resistance to antibiotics containing the 2-deoxy-streptamine ring including gentamicin, kanamycin, tobramycin, neomycin and apramycin. The protein is Aminoglycoside N(3)-acetyltransferase IV (aacC4) of Salmonella sp.